Reading from the N-terminus, the 240-residue chain is Proteasome subunit beta type-1 (240 aa).

Methionine 1 carries the N-acetylmethionine modification. A propeptide spanning residues 1–27 is cleaved from the precursor; sequence MLSTAAYRDPDRELVMGPQGSAGPVQM. Serine 57 carries O-linked (GlcNAc) serine glycosylation. A phosphoserine mark is found at serine 61 and serine 67. Tyrosine 149 is subject to Phosphotyrosine. Position 161 is a phosphoserine (serine 161). An N6-acetyllysine modification is found at lysine 203. Residue serine 208 is glycosylated (O-linked (GlcNAc) serine).

The protein belongs to the peptidase T1B family. The 26S proteasome consists of a 20S proteasome core and two 19S regulatory subunits. The 20S proteasome core is a barrel-shaped complex made of 28 subunits that are arranged in four stacked rings. The two outer rings are each formed by seven alpha subunits, and the two inner rings are formed by seven beta subunits. The proteolytic activity is exerted by three beta-subunits PSMB5, PSMB6 and PSMB7. Interacts with SERPINB2. Interacts with RFPL4A. In terms of tissue distribution, ubiquitous.

It is found in the cytoplasm. It localises to the nucleus. Functionally, non-catalytic component of the 20S core proteasome complex involved in the proteolytic degradation of most intracellular proteins. This complex plays numerous essential roles within the cell by associating with different regulatory particles. Associated with two 19S regulatory particles, forms the 26S proteasome and thus participates in the ATP-dependent degradation of ubiquitinated proteins. The 26S proteasome plays a key role in the maintenance of protein homeostasis by removing misfolded or damaged proteins that could impair cellular functions, and by removing proteins whose functions are no longer required. Associated with the PA200 or PA28, the 20S proteasome mediates ubiquitin-independent protein degradation. This type of proteolysis is required in several pathways including spermatogenesis (20S-PA200 complex) or generation of a subset of MHC class I-presented antigenic peptides (20S-PA28 complex). This Rattus norvegicus (Rat) protein is Proteasome subunit beta type-1 (Psmb1).